The following is a 5400-amino-acid chain: Midasin (5400 aa).

AAA-ATPase protomer stretches follow at residues 345–571 (MVSL…HGLP), 656–986 (LLEK…AIKA), 1050–1308 (SYVK…EKVV), 1347–1652 (SMRR…VNMA), 1769–2023 (VLRV…VLRI), and 2074–2347 (IRQN…MMGP). ATP is bound by residues 360-367 (GPSGSGKS), 674-681 (GETGTGKT), 1079-1086 (GPTSSGKT), 1369-1376 (GDTGGGKT), 1786-1793 (GSPGVGKT), and 2095-2102 (GPSSSGKT). The tract at residues 2435–4569 (IYLSSLGVTD…DGVGAKDVSD (2135 aa)) is linker. Coiled coils occupy residues 2896 to 2916 (LERL…SEID), 3233 to 3253 (AMKI…LELN), and 3896 to 3916 (MEQL…VLKL). Disordered regions lie at residues 4540 to 4890 (EEDD…SSSN), 4905 to 4929 (TLTD…TKVN), and 4990 to 5069 (QVNT…RMDS). Over residues 4576–4612 (QLHGTDKKEEEEKEQDDVLGKNKGIEMSDEFDGKEYS) the composition is skewed to basic and acidic residues. The span at 4613–4631 (VSEDEEEDKEDEGSEDEPL) shows a compositional bias: acidic residues. 2 stretches are compositionally biased toward basic and acidic residues: residues 4641 to 4652 (DAEKADEKPWNK) and 4661 to 4687 (MNEK…KDDG). 2 stretches are compositionally biased toward acidic residues: residues 4688-4698 (VETADEPEESN) and 4706-4721 (GNDE…DTDN). Positions 4722-4732 (LEEKIQTKEEA) are enriched in basic and acidic residues. Positions 4740 to 4750 (VDNEQIDDDME) are enriched in acidic residues. Basic and acidic residues predominate over residues 4751–4762 (MDKTEEVEKEDA). Acidic residues predominate over residues 4779–4798 (GENDQEETQEPSEENMEAEA). Positions 4799-4810 (EDRCGSPQKEEP) are enriched in basic and acidic residues. Over residues 4811 to 4822 (GNDLEQEPETEP) the composition is skewed to acidic residues. The segment covering 4823-4834 (IEGKEVMSEDMM) has biased composition (basic and acidic residues). Polar residues-rich tracts occupy residues 4839–4855 (RNDN…NPHG), 4864–4874 (TAPQENLSATD), 4916–4928 (PQNQ…QTKV), and 5030–5040 (SKPSISNSIAE). The Nuclear localization signal motif lies at 5157 to 5164 (MKKVIPYI). In terms of domain architecture, VWFA spans 5186 to 5387 (QVVIAVDDSR…EALPRTLGDV (202 aa)). A coiled-coil region spans residues 5271–5291 (VVNLLRNMNEMLENLASTRRQ).

This sequence belongs to the midasin family. In terms of assembly, associates with pre-60S ribosomes in the nucleoplasm. Constitutively and ubiquitously expressed. Mostly observed in the shoot apex and root tip, and, to a lower extent, in mature seeds, seedling (excluding the hypocotyl), roots, stems, leaves and flowers.

The protein localises to the nucleus. Its subcellular location is the nucleolus. It is found in the nucleoplasm. Its function is as follows. Nuclear chaperone required for maturation and nuclear export of pre-60S ribosome subunits. Functions at successive maturation steps to remove ribosomal factors at critical transition points, first driving the exit of early pre-60S particles from the nucleolus and then driving late pre-60S particles from the nucleus. Required for female gametophyte development. Involved in the expression regulation of genes related to plant growth and development. This is Midasin from Arabidopsis thaliana (Mouse-ear cress).